A 146-amino-acid chain; its full sequence is 3-dehydroquinate dehydratase (146 aa).

The active-site Proton acceptor is the Y22. Positions 74, 80, and 87 each coordinate substrate. Catalysis depends on H100, which acts as the Proton donor. Substrate-binding positions include 101–102 (LS) and R111.

This sequence belongs to the type-II 3-dehydroquinase family. In terms of assembly, homododecamer.

It catalyses the reaction 3-dehydroquinate = 3-dehydroshikimate + H2O. Its pathway is metabolic intermediate biosynthesis; chorismate biosynthesis; chorismate from D-erythrose 4-phosphate and phosphoenolpyruvate: step 3/7. Catalyzes a trans-dehydration via an enolate intermediate. The protein is 3-dehydroquinate dehydratase of Clostridium beijerinckii (strain ATCC 51743 / NCIMB 8052) (Clostridium acetobutylicum).